The primary structure comprises 394 residues: Histidinol dehydrogenase (394 aa).

Tyr113, Gln172, and Asn195 together coordinate NAD(+). Thr218, Gln240, and His243 together coordinate substrate. Residues Gln240 and His243 each coordinate Zn(2+). Residues Glu294 and His295 each act as proton acceptor in the active site. Substrate contacts are provided by His295, Asp327, Glu380, and His385. Asp327 lines the Zn(2+) pocket. His385 is a Zn(2+) binding site.

Belongs to the histidinol dehydrogenase family. Zn(2+) is required as a cofactor.

The enzyme catalyses L-histidinol + 2 NAD(+) + H2O = L-histidine + 2 NADH + 3 H(+). It participates in amino-acid biosynthesis; L-histidine biosynthesis; L-histidine from 5-phospho-alpha-D-ribose 1-diphosphate: step 9/9. Catalyzes the sequential NAD-dependent oxidations of L-histidinol to L-histidinaldehyde and then to L-histidine. This Sulfurisphaera tokodaii (strain DSM 16993 / JCM 10545 / NBRC 100140 / 7) (Sulfolobus tokodaii) protein is Histidinol dehydrogenase.